A 226-amino-acid polypeptide reads, in one-letter code: V-type proton ATPase subunit E 2 (226 aa).

It belongs to the V-ATPase E subunit family. In terms of assembly, V-ATPase is a heteromultimeric enzyme made up of two complexes: the ATP-hydrolytic V1 complex and the proton translocation V0 complex. The V1 complex consists of three catalytic AB heterodimers that form a heterohexamer, three peripheral stalks each consisting of EG heterodimers, one central rotor including subunits D and F, and the regulatory subunits C and H. The proton translocation complex V0 consists of the proton transport subunit a, a ring of proteolipid subunits c9c'', rotary subunit d, subunits e and f, and the accessory subunits ATP6AP1/Ac45 and ATP6AP2/PRR. As to expression, testis specific.

Functionally, subunit of the V1 complex of vacuolar(H+)-ATPase (V-ATPase), a multisubunit enzyme composed of a peripheral complex (V1) that hydrolyzes ATP and a membrane integral complex (V0) that translocates protons. V-ATPase is responsible for acidifying and maintaining the pH of intracellular compartments and in some cell types, is targeted to the plasma membrane, where it is responsible for acidifying the extracellular environment. This chain is V-type proton ATPase subunit E 2 (ATP6V1E2), found in Homo sapiens (Human).